The primary structure comprises 129 residues: Flagellar assembly factor FliW (129 aa).

It belongs to the FliW family. As to quaternary structure, interacts with translational regulator CsrA and flagellin(s).

Its subcellular location is the cytoplasm. Functionally, acts as an anti-CsrA protein, binds CsrA and prevents it from repressing translation of its target genes, one of which is flagellin. Binds to flagellin and participates in the assembly of the flagellum. The chain is Flagellar assembly factor FliW from Campylobacter jejuni subsp. doylei (strain ATCC BAA-1458 / RM4099 / 269.97).